Here is a 312-residue protein sequence, read N- to C-terminus: Glyoxylate/hydroxypyruvate reductase A (312 aa).

R227 is a catalytic residue. Catalysis depends on H275, which acts as the Proton donor.

It belongs to the D-isomer specific 2-hydroxyacid dehydrogenase family. GhrA subfamily.

The protein resides in the cytoplasm. The catalysed reaction is glycolate + NADP(+) = glyoxylate + NADPH + H(+). It carries out the reaction (R)-glycerate + NAD(+) = 3-hydroxypyruvate + NADH + H(+). The enzyme catalyses (R)-glycerate + NADP(+) = 3-hydroxypyruvate + NADPH + H(+). Its function is as follows. Catalyzes the NADPH-dependent reduction of glyoxylate and hydroxypyruvate into glycolate and glycerate, respectively. In Escherichia coli O17:K52:H18 (strain UMN026 / ExPEC), this protein is Glyoxylate/hydroxypyruvate reductase A.